Here is a 229-residue protein sequence, read N- to C-terminus: Aminodeoxyfutalosine nucleosidase (229 aa).

Residue Glu13 is the Proton acceptor of the active site. Residues Gly79, Ile153, and 173-174 each bind substrate; that span reads ME. The active-site Proton donor is the Asp197.

This sequence belongs to the PNP/UDP phosphorylase family. Homodimer.

The enzyme catalyses 6-amino-6-deoxyfutalosine + H2O = dehypoxanthine futalosine + adenine. It catalyses the reaction S-adenosyl-L-homocysteine + H2O = S-(5-deoxy-D-ribos-5-yl)-L-homocysteine + adenine. It carries out the reaction S-methyl-5'-thioadenosine + H2O = 5-(methylsulfanyl)-D-ribose + adenine. The catalysed reaction is 5'-deoxyadenosine + H2O = 5-deoxy-D-ribose + adenine. Its pathway is quinol/quinone metabolism; menaquinone biosynthesis. It participates in amino-acid biosynthesis; L-methionine biosynthesis via salvage pathway; S-methyl-5-thio-alpha-D-ribose 1-phosphate from S-methyl-5'-thioadenosine (hydrolase route): step 1/2. Catalyzes the direct conversion of aminodeoxyfutalosine (AFL) into dehypoxanthine futalosine (DHFL) and adenine via the hydrolysis of the N-glycosidic bond; this reaction seems to represent an essential step in the menaquinone biosynthesis pathway in Campylobacter species. Also catalyzes the hydrolysis of 5'-methylthioadenosine (MTA) to adenine and 5'-methylthioribose. Can also probably use S-adenosylhomocysteine (SAH) as substrate, leading to adenine and S-ribosylhomocysteine. These other activities highlight the tremendous versatility of the enzyme, which also plays key roles in S-adenosylmethionine recycling and in the biosynthesis of the quorum-sensing molecule autoinducer-2. Shows negligible activity with futalosine (FL) as substrate. The chain is Aminodeoxyfutalosine nucleosidase (pfs) from Campylobacter jejuni subsp. jejuni serotype O:2 (strain ATCC 700819 / NCTC 11168).